We begin with the raw amino-acid sequence, 142 residues long: Ribosome-binding factor A (142 aa).

This sequence belongs to the RbfA family. Monomer. Binds 30S ribosomal subunits, but not 50S ribosomal subunits or 70S ribosomes.

Its subcellular location is the cytoplasm. One of several proteins that assist in the late maturation steps of the functional core of the 30S ribosomal subunit. Associates with free 30S ribosomal subunits (but not with 30S subunits that are part of 70S ribosomes or polysomes). Required for efficient processing of 16S rRNA. May interact with the 5'-terminal helix region of 16S rRNA. The polypeptide is Ribosome-binding factor A (Leifsonia xyli subsp. xyli (strain CTCB07)).